A 426-amino-acid chain; its full sequence is Histidine--tRNA ligase (426 aa).

Belongs to the class-II aminoacyl-tRNA synthetase family.

The protein localises to the cytoplasm. It catalyses the reaction tRNA(His) + L-histidine + ATP = L-histidyl-tRNA(His) + AMP + diphosphate + H(+). The protein is Histidine--tRNA ligase of Saccharolobus solfataricus (strain ATCC 35092 / DSM 1617 / JCM 11322 / P2) (Sulfolobus solfataricus).